A 538-amino-acid chain; its full sequence is Dolichol kinase (538 aa).

The Lumenal segment spans residues Met-1–Gly-18. A helical membrane pass occupies residues Ser-19 to Trp-39. The Cytoplasmic portion of the chain corresponds to Asp-40–Arg-74. The helical transmembrane segment at Met-75–Met-95 threads the bilayer. Over Lys-96–Gly-111 the chain is Lumenal. Residues Ile-112 to Ile-132 traverse the membrane as a helical segment. The Cytoplasmic segment spans residues Thr-133–Arg-134. Residues Pro-135–Met-155 traverse the membrane as a helical segment. Residues Lys-156–Glu-163 are Lumenal-facing. Residues Val-164–Leu-184 traverse the membrane as a helical segment. Topologically, residues Leu-185 to Cys-188 are cytoplasmic. Residues Phe-189 to Ile-209 form a helical membrane-spanning segment. Topologically, residues Lys-210–Asp-224 are lumenal. A helical transmembrane segment spans residues Phe-225–Phe-245. The Cytoplasmic segment spans residues Val-246–Ala-254. The chain crosses the membrane as a helical span at residues Ser-255–Leu-275. The Lumenal segment spans residues His-276 to Arg-297. Residues Val-298–Gln-318 form a helical membrane-spanning segment. At Asn-319–Arg-337 the chain is on the cytoplasmic side. The chain crosses the membrane as a helical span at residues Lys-338 to Leu-354. The Lumenal segment spans residues Asp-355–Leu-359. The chain crosses the membrane as a helical span at residues Tyr-360–Arg-380. Over Ile-381–Ser-401 the chain is Cytoplasmic. Residues Gly-402–Val-422 traverse the membrane as a helical segment. At Pro-423–Arg-436 the chain is on the lumenal side. The chain crosses the membrane as a helical span at residues Ala-437–Phe-457. At Gly-458–Thr-472 the chain is on the cytoplasmic side. Residues Ser-459–Glu-474 are CTP-binding. The helical transmembrane segment at Phe-473–Phe-493 threads the bilayer. The Lumenal segment spans residues Asp-494–Ser-495. A helical membrane pass occupies residues Gly-496–Leu-516. At Glu-517–Ala-538 the chain is on the cytoplasmic side.

The protein belongs to the polyprenol kinase family.

It localises to the endoplasmic reticulum membrane. The catalysed reaction is a di-trans,poly-cis-dolichol + CTP = a di-trans,poly-cis-dolichyl phosphate + CDP + H(+). Its pathway is protein modification; protein glycosylation. In terms of biological role, catalyzes CTP-mediated phosphorylation of dolichol, the terminal step in de novo dolichyl monophosphate (Dol-P) biosynthesis. Dol-P is a lipid carrier essential for the synthesis of N-linked and O-linked oligosaccharides and for GPI anchors. This chain is Dolichol kinase (DOLK), found in Bos taurus (Bovine).